Reading from the N-terminus, the 418-residue chain is UDP-N-acetylglucosamine 1-carboxyvinyltransferase (418 aa).

22–23 (KN) is a phosphoenolpyruvate binding site. R91 is a binding site for UDP-N-acetyl-alpha-D-glucosamine. The Proton donor role is filled by C115. The residue at position 115 (C115) is a 2-(S-cysteinyl)pyruvic acid O-phosphothioketal. UDP-N-acetyl-alpha-D-glucosamine-binding residues include D305 and I327.

This sequence belongs to the EPSP synthase family. MurA subfamily.

It is found in the cytoplasm. The catalysed reaction is phosphoenolpyruvate + UDP-N-acetyl-alpha-D-glucosamine = UDP-N-acetyl-3-O-(1-carboxyvinyl)-alpha-D-glucosamine + phosphate. Its pathway is cell wall biogenesis; peptidoglycan biosynthesis. Functionally, cell wall formation. Adds enolpyruvyl to UDP-N-acetylglucosamine. The sequence is that of UDP-N-acetylglucosamine 1-carboxyvinyltransferase from Aeromonas salmonicida (strain A449).